Consider the following 311-residue polypeptide: Dof zinc finger protein DOF1.4 (311 aa).

The span at 1-12 shows a compositional bias: polar residues; sequence MQSKNMIVASSH. The segment at 1–29 is disordered; that stretch reads MQSKNMIVASSHQQQQQQQPQQPQPQLKC. Positions 13–26 are enriched in low complexity; that stretch reads QQQQQQQPQQPQPQ. A Dof-type zinc finger spans residues 27-81; it reads LKCPRCDSSNTKFCYYNNYSLSQPRHFCKACKRYWTRGGTLRNVPVGGSYRKNKR. Zn(2+)-binding residues include Cys-29, Cys-32, Cys-54, and Cys-57. The disordered stretch occupies residues 72–110; the sequence is VGGSYRKNKRVKRPSTATTTTASTVSTTNSSSPNNPHQI. Low complexity predominate over residues 85-107; it reads PSTATTTTASTVSTTNSSSPNNP.

It localises to the nucleus. In terms of biological role, transcription factor that binds specifically to a 5'-AA[AG]G-3' consensus core sequence. This chain is Dof zinc finger protein DOF1.4 (DOF1.4), found in Arabidopsis thaliana (Mouse-ear cress).